A 204-amino-acid polypeptide reads, in one-letter code: Transcriptional regulator GfcR (204 aa).

Belongs to the purine/pyrimidine phosphoribosyltransferase family. GfcR subfamily.

This Methanosarcina mazei (strain ATCC BAA-159 / DSM 3647 / Goe1 / Go1 / JCM 11833 / OCM 88) (Methanosarcina frisia) protein is Transcriptional regulator GfcR.